Reading from the N-terminus, the 255-residue chain is Major prion protein (255 aa).

The N-terminal stretch at 1–24 is a signal peptide; it reads MVKSHIGSWILVLFVAMWSDVGLC. The segment at 25–41 is interaction with ADGRG6; the sequence is KKRPKPGGGWNTGGSRY. The segment at 25–232 is interaction with GRB2, ERI3 and SYN1; that stretch reads KKRPKPGGGW…ESEAYYQRGA (208 aa). A disordered region spans residues 28–110; the sequence is PKPGGGWNTG…QWNKPSKPKT (83 aa). A run of 5 repeats spans residues 54–62, 63–70, 71–78, 79–86, and 87–94. Residues 54–94 are 5 X 8 AA tandem repeats of P-H-G-G-G-W-G-Q; the sequence is PQGGGGWGQPHGGGWGQPHGGGWGQPHGGGWGQPHGGGGWG. The span at 55 to 97 shows a compositional bias: gly residues; the sequence is QGGGGWGQPHGGGWGQPHGGGWGQPHGGGWGQPHGGGGWGQGG. Cu(2+) is bound by residues His-64, Gly-65, Gly-66, His-72, Gly-73, Gly-74, His-80, Gly-81, Gly-82, His-88, Gly-90, and Gly-91. Residues Asn-174, Asn-184, and Asn-199 are each glycosylated (N-linked (GlcNAc...) asparagine). Cys-182 and Cys-216 form a disulfide bridge. Ala-232 carries GPI-anchor amidated alanine lipidation. The propeptide at 233-255 is removed in mature form; that stretch reads SVILFSSPPVILLVSFLIFLIVG.

The protein belongs to the prion family. Monomer and homodimer. Has a tendency to aggregate into amyloid fibrils containing a cross-beta spine, formed by a steric zipper of superposed beta-strands. Soluble oligomers may represent an intermediate stage on the path to fibril formation. Copper binding may promote oligomerization. Interacts with GRB2, APP, ERI3/PRNPIP and SYN1. Mislocalized cytosolically exposed PrP interacts with MGRN1; this interaction alters MGRN1 subcellular location and causes lysosomal enlargement. Interacts with APP. Interacts with KIAA1191. Interacts with ADGRG6.

Its subcellular location is the cell membrane. The protein localises to the golgi apparatus. Its function is as follows. Its primary physiological function is unclear. May play a role in neuronal development and synaptic plasticity. May be required for neuronal myelin sheath maintenance. May promote myelin homeostasis through acting as an agonist for ADGRG6 receptor. May play a role in iron uptake and iron homeostasis. Soluble oligomers are toxic to cultured neuroblastoma cells and induce apoptosis (in vitro). Association with GPC1 (via its heparan sulfate chains) targets PRNP to lipid rafts. Also provides Cu(2+) or Zn(2+) for the ascorbate-mediated GPC1 deaminase degradation of its heparan sulfate side chains. This Canis lupus familiaris (Dog) protein is Major prion protein (PRNP).